The primary structure comprises 133 residues: ATP synthase epsilon chain, chloroplastic (133 aa).

Belongs to the ATPase epsilon chain family. In terms of assembly, F-type ATPases have 2 components, CF(1) - the catalytic core - and CF(0) - the membrane proton channel. CF(1) has five subunits: alpha(3), beta(3), gamma(1), delta(1), epsilon(1). CF(0) has three main subunits: a, b and c.

The protein localises to the plastid. Its subcellular location is the chloroplast thylakoid membrane. Functionally, produces ATP from ADP in the presence of a proton gradient across the membrane. The chain is ATP synthase epsilon chain, chloroplastic from Atropa belladonna (Belladonna).